Here is a 182-residue protein sequence, read N- to C-terminus: MAQKERGEREERDNEFVDRLVHINRVAKVVKGGRRFGFAALVVVGDQKGRVGFGHGKAREVPEAVRKATESAKRGMIYVPLRSGRTLHHDLEGRHGAGRVLLRSASAGTGIIAGGPMRAIFEALGMQDVVAKSLGSSNPYNMVRATFDALKHQMHPRDIAAQRGIKYSTLQARRRHLVDVEG.

The region spanning 16–79 (FVDRLVHINR…ESAKRGMIYV (64 aa)) is the S5 DRBM domain.

Belongs to the universal ribosomal protein uS5 family. Part of the 30S ribosomal subunit. Contacts proteins S4 and S8.

Functionally, with S4 and S12 plays an important role in translational accuracy. Its function is as follows. Located at the back of the 30S subunit body where it stabilizes the conformation of the head with respect to the body. The protein is Small ribosomal subunit protein uS5 of Bartonella tribocorum (strain CIP 105476 / IBS 506).